The primary structure comprises 350 residues: Small ribosomal subunit biogenesis GTPase RsgA (350 aa).

Residues 1–17 (MSKNKLSKGQQRRVNAN) show a composition bias toward polar residues. The segment at 1–33 (MSKNKLSKGQQRRVNANHQRRLKTSKEKPDYDD) is disordered. In terms of domain architecture, CP-type G spans 104-273 (TSVLTRPDFY…VIDSPGVREF (170 aa)). GTP-binding positions include 160–163 (NKID) and 214–222 (GQSGVGKSS). Residues cysteine 297, cysteine 302, histidine 304, and cysteine 310 each contribute to the Zn(2+) site.

This sequence belongs to the TRAFAC class YlqF/YawG GTPase family. RsgA subfamily. In terms of assembly, monomer. Associates with 30S ribosomal subunit, binds 16S rRNA. Zn(2+) is required as a cofactor.

Its subcellular location is the cytoplasm. Its function is as follows. One of several proteins that assist in the late maturation steps of the functional core of the 30S ribosomal subunit. Helps release RbfA from mature subunits. May play a role in the assembly of ribosomal proteins into the subunit. Circularly permuted GTPase that catalyzes slow GTP hydrolysis, GTPase activity is stimulated by the 30S ribosomal subunit. The sequence is that of Small ribosomal subunit biogenesis GTPase RsgA from Shigella flexneri.